We begin with the raw amino-acid sequence, 302 residues long: Lactoylglutathione lyase (302 aa).

VOC domains lie at 11–153 and 166–301; these read KLNH…LVSQ and RFNH…VIEQ. H14 contacts Zn(2+). Substrate is bound at residue R18. Residue E75 coordinates Zn(2+). Substrate is bound by residues N79, R99, and H103. Residues H103 and E149 each coordinate Zn(2+). Catalysis depends on E149, which acts as the Proton donor/acceptor.

This sequence belongs to the glyoxalase I family. Monomer. Zn(2+) is required as a cofactor. Requires Cu(2+) as cofactor. The cofactor is Ni(2+). Mn(2+) serves as cofactor.

It catalyses the reaction (R)-S-lactoylglutathione = methylglyoxal + glutathione. It participates in secondary metabolite metabolism; methylglyoxal degradation; (R)-lactate from methylglyoxal: step 1/2. In terms of biological role, catalyzes the conversion of hemimercaptal, formed from methylglyoxal and glutathione, to S-lactoylglutathione. The chain is Lactoylglutathione lyase (glo1) from Schizosaccharomyces pombe (strain 972 / ATCC 24843) (Fission yeast).